The primary structure comprises 254 residues: Alcohol dehydrogenase 1 (254 aa).

Phe-10 to Leu-33 provides a ligand contact to NAD(+). Ser-138 provides a ligand contact to substrate. The Proton acceptor role is filled by Tyr-151.

The protein belongs to the short-chain dehydrogenases/reductases (SDR) family. As to quaternary structure, homodimer.

It catalyses the reaction a primary alcohol + NAD(+) = an aldehyde + NADH + H(+). The enzyme catalyses a secondary alcohol + NAD(+) = a ketone + NADH + H(+). This Drosophila hydei (Fruit fly) protein is Alcohol dehydrogenase 1 (Adh1).